The chain runs to 380 residues: Chaperone protein DnaJ (380 aa).

One can recognise a J domain in the interval 5–72 (DYYDTLGVPK…QKRAAYDQYG (68 aa)). The disordered stretch occupies residues 21–47 (IKKAYRKLAMKHHPDRNQGDTSKVSED). A compositionally biased stretch (basic residues) spans 24 to 34 (AYRKLAMKHHP). A compositionally biased stretch (basic and acidic residues) spans 35–47 (DRNQGDTSKVSED). The CR-type zinc finger occupies 139-217 (GKEAQIRIPS…CHGVGKTKNN (79 aa)). The Zn(2+) site is built by C152, C155, C169, C172, C191, C194, C205, and C208. 4 CXXCXGXG motif repeats span residues 152-159 (CGICHGTG), 169-176 (CTTCHGHG), 191-198 (CPQCKGSG), and 205-212 (CVACHGVG).

This sequence belongs to the DnaJ family. In terms of assembly, homodimer. Requires Zn(2+) as cofactor.

Its subcellular location is the cytoplasm. Functionally, participates actively in the response to hyperosmotic and heat shock by preventing the aggregation of stress-denatured proteins and by disaggregating proteins, also in an autonomous, DnaK-independent fashion. Unfolded proteins bind initially to DnaJ; upon interaction with the DnaJ-bound protein, DnaK hydrolyzes its bound ATP, resulting in the formation of a stable complex. GrpE releases ADP from DnaK; ATP binding to DnaK triggers the release of the substrate protein, thus completing the reaction cycle. Several rounds of ATP-dependent interactions between DnaJ, DnaK and GrpE are required for fully efficient folding. Also involved, together with DnaK and GrpE, in the DNA replication of plasmids through activation of initiation proteins. The chain is Chaperone protein DnaJ from Polaromonas naphthalenivorans (strain CJ2).